Consider the following 1272-residue polypeptide: Myosin-binding protein C, cardiac-type (1272 aa).

The segment at 95–147 is disordered; sequence KEPEKSEPVAPAEASPAPAASELPAPPVESNQNPEVPPAETQPEEPVDPIGLF. Low complexity predominate over residues 102–117; it reads PVAPAEASPAPAASEL. The Ig-like C2-type 1 domain occupies 137 to 252; sequence PEEPVDPIGL…NLIVNEAPVS (116 aa). The residue at position 265 (serine 265) is a Phosphoserine; by PKA and PKC. Threonine 274 is modified (phosphothreonine; by PKA and PKC). Serine 300 is modified (phosphoserine; by PKA). Ig-like C2-type domains lie at 359–451, 452–542, 543–640, and 644–763; these read KKST…VKEP, PILI…VQEK, KLEV…FVPR, and PKIH…ADIT. 2 consecutive Fibronectin type-III domains span residues 772–868 and 870–965; these read PPEA…IAPP and EPTH…VQEI. The Ig-like C2-type 6 domain occupies 969–1057; the sequence is PKICVPRHLR…ENMTDTVAIT (89 aa). The region spanning 1066 to 1161 is the Fibronectin type-III 3 domain; it reads PPQNIKLADV…TKNPAYIQKT (96 aa). Phosphoserine; by PKC is present on serine 1169. Positions 1179-1263 constitute an Ig-like C2-type 7 domain; it reads PKFTHPLVNR…VNERGEAEIE (85 aa).

It belongs to the immunoglobulin superfamily. MyBP family. Substrate for phosphorylation by PKA and PKC. Reversible phosphorylation appears to modulate contraction. In terms of tissue distribution, expressed specifically in cardiac muscle among adult tissues, but is also expressed transiently in the skeletal muscle at early developmental stages. Isoform Type I is found in embryonic skeletal muscle and isoform Type II is found in both embryonic skeletal and cardiac muscle.

In terms of biological role, thick filament-associated protein located in the crossbridge region of vertebrate striated muscle A bands. In vitro it binds MHC, F-actin and native thin filaments, and modifies the activity of actin-activated myosin ATPase. It may modulate muscle contraction or may play a more structural role. May be involved in the early phase of myofibrillogenesis. This Gallus gallus (Chicken) protein is Myosin-binding protein C, cardiac-type (MYBPC3).